A 230-amino-acid chain; its full sequence is Acetyltransferase (230 aa).

The N-acetyltransferase domain occupies 143-230; sequence RYLDGKVICD…RVAVYKARQT (88 aa).

The protein operates within mycotoxin biosynthesis. In terms of biological role, acetyltransferase; part of the satratoxin SC3 cluster involved in the biosynthesis of satratoxins, trichothecene mycotoxins that are associated with human food poisonings. Satratoxins are suggested to be made by products of multiple gene clusters (SC1, SC2 and SC3) that encode 21 proteins in all, including polyketide synthases, acetyltransferases, and other enzymes expected to modify the trichothecene skeleton. SC1 encodes 10 proteins, SAT1 to SAT10. The largest are SAT8, which encodes a putative polyketide synthase (PKS) with a conventional non-reducing architecture, and SAT10, a putative protein containing four ankyrin repeats and thus may be involved in protein scaffolding. The putative short-chain reductase SAT3 may assist the PKS in some capacity. SAT6 contains a secretory lipase domain and acts probably as a trichothecene esterase. SAT5 encodes a putative acetyltransferase, and so, with SAT6, may affect endogenous protection from toxicity. The probable transcription factor SAT9 may regulate the expression of the SC1 cluster. SC2 encodes proteins SAT11 to SAT16, the largest of which encodes the putative reducing PKS SAT13. SAT11 is a cytochrome P450 monooxygenase, while SAT14 and SAT16 are probable acetyltransferases. The SC2 cluster may be regulated by the transcription factor SAT15. SC3 is a small cluster that encodes 5 proteins, SAT17 to SAT21. SAT21 is a putative MFS-type transporter which may have a role in exporting secondary metabolites. The four other proteins putatively encoded in SC3 include the taurine hydroxylase-like protein SAT17, the O-methyltransferase SAT18, the acetyltransferase SAT19, and the Cys6-type zinc finger SAT20, the latter being probably involved in regulation of SC3 expression. The chain is Acetyltransferase from Stachybotrys chartarum (strain CBS 109288 / IBT 7711) (Toxic black mold).